A 179-amino-acid chain; its full sequence is 5'-deoxynucleotidase VV1_0013 (179 aa).

His53 serves as a coordination point for a divalent metal cation. Substrate is bound by residues 62–65 and Asp122; that span reads DLPT. Asp122 is an a divalent metal cation binding site.

Belongs to the 5DNU family. In terms of assembly, homodimer. A divalent metal cation serves as cofactor.

The protein resides in the cytoplasm. The enzyme catalyses a 2'-deoxyribonucleoside 5'-phosphate + H2O = a 2'-deoxyribonucleoside + phosphate. Its function is as follows. Catalyzes the strictly specific dephosphorylation of 2'-deoxyribonucleoside 5'-monophosphates. The protein is 5'-deoxynucleotidase VV1_0013 of Vibrio vulnificus (strain CMCP6).